Reading from the N-terminus, the 365-residue chain is MTENHYLLLTPGPLTTTKTVKEVMLYDWCTWDVEYNMMVQKVRAKLVSLATKEEEKYTTVLMQGSGTFSVEAVIGSVIPKNGKLLVCTNGAYGKRIVQMAEMLHIDVVVSQTEEWEPTNIVEVEKILQQDKEITHIAVVHCETTTGIINPIVDVCKLGKQYGKVTLVDAMSSFGGIEIDIAELQIDFLISSANKCIQGVPGFGFVIAQRDELLKCKGQARSLSLDLYDQWETMENQNGKWRFTSPTHVVHAFYQALLELEKEGGVRARYNRYYNNQKLLVNRMGEIGFKPLVNEKYQSPIITSFIYPEGNFEFQQLYNELKRYGFVIYPGKISKVDTFRIGNIGDVHEEDINRLVDSIAKGVVIG.

N6-(pyridoxal phosphate)lysine is present on Lys-194.

This sequence belongs to the class-V pyridoxal-phosphate-dependent aminotransferase family. PhnW subfamily. Homodimer. It depends on pyridoxal 5'-phosphate as a cofactor.

The enzyme catalyses (2-aminoethyl)phosphonate + pyruvate = phosphonoacetaldehyde + L-alanine. Functionally, involved in phosphonate degradation. The sequence is that of 2-aminoethylphosphonate--pyruvate transaminase from Bacillus cereus (strain 03BB102).